We begin with the raw amino-acid sequence, 270 residues long: Small ribosomal subunit protein eS1 (270 aa).

Residues 235–270 form a disordered region; it reads GTSKGGAASTAAVAKGEEGVKVDRPEGYEPPVLETV. A compositionally biased stretch (low complexity) spans 239–248; that stretch reads GGAASTAAVA. The span at 249 to 261 shows a compositional bias: basic and acidic residues; it reads KGEEGVKVDRPEG.

Belongs to the eukaryotic ribosomal protein eS1 family. As to quaternary structure, component of the small ribosomal subunit. Mature ribosomes consist of a small (40S) and a large (60S) subunit. The 40S subunit contains about 33 different proteins and 1 molecule of RNA (18S). The 60S subunit contains about 49 different proteins and 3 molecules of RNA (28S, 5.8S and 5S).

It is found in the cytoplasm. The protein is Small ribosomal subunit protein eS1 of Ixodes scapularis (Black-legged tick).